The chain runs to 316 residues: uncharacterized protein (316 aa).

The region spanning 26 to 98 (ERIDRFLAGA…IPLDVVYEDA (73 aa)) is the S4 RNA-binding domain. Asp-148 is a catalytic residue.

Belongs to the pseudouridine synthase RluA family.

The enzyme catalyses a uridine in RNA = a pseudouridine in RNA. This is an uncharacterized protein from Chloroflexus aurantiacus (strain ATCC 29366 / DSM 635 / J-10-fl).